Here is a 911-residue protein sequence, read N- to C-terminus: Ribonuclease J (911 aa).

Residues 1 to 70 constitute a chloroplast transit peptide; sequence MMKPASLQGF…VTSAPASGTS (70 aa). The interval 58–90 is disordered; it reads SCSVTSAPASGTSSSSKTPRRRSGRLEGVGKSM. Over residues 63–74 the composition is skewed to low complexity; that stretch reads SAPASGTSSSSK. Residues H175, H177, D179, H180, H245, and D267 each coordinate Zn(2+). Residues 336-338 and 468-472 each bind substrate; these read ASN and HTSGH. H494 is a binding site for Zn(2+). Disordered stretches follow at residues 695–723 and 735–824; these read VEGN…TLED and EETA…WKPE. 2 stretches are compositionally biased toward basic and acidic residues: residues 713 to 722 and 783 to 795; these read SPKEVDRTLE and ADTE…KENS. A compositionally biased stretch (acidic residues) spans 796 to 806; the sequence is RDDDELADASD. The region spanning 813–877 is the Myb-like domain; the sequence is PKRVRKNKWK…QCKSLWASLI (65 aa).

This sequence belongs to the metallo-beta-lactamase superfamily. RNA-metabolizing metallo-beta-lactamase-like family. Bacterial RNase J subfamily. As to quaternary structure, homodimer. May be a subunit of the RNA degradosome. It depends on Zn(2+) as a cofactor. As to expression, moslty expressed in inflorescences, seedlings, leaves, flowers and flower buds, and, to a lower extent, in stems, siliques and roots.

The protein resides in the plastid. It localises to the chloroplast. Functionally, essential protein required during embryogenesis, especially in initiating and maintaining the organization of shoot apical meristems (SAMs), cotyledons, and hypocotyls. Involved in auxin-mediated pathways during embryogenesis. RNase that has both endonuclease and 5'-3' exonuclease activities. Involved in RNA surveillance to prevent overaccumulation of antisense RNA. Probably involved in maturation of rRNA and in some organisms also mRNA maturation and/or decay. This Arabidopsis thaliana (Mouse-ear cress) protein is Ribonuclease J.